Here is a 1023-residue protein sequence, read N- to C-terminus: MGKGVGRDKYEPAAVSEHGDKKGKKAKKERDMDELKKEVSMDDHKLSLDELHRKYGTDLSRGLTTARAAEILARDGPNALTPPPTTPEWVKFCRQLFGGFSMLLWIGAILCFLAYGILAATEEDFDNDNLYLGVVLAAVVIITGCFSYYQEAKSSKIMESFKNMVPQQALVIRNGEKMSINAEDVVVGDLVEVKGGDRIPADLRIISANGCKVDNSSLTGESEPQTRSPDFTNENPLETRNIAFFSTNCVEGTARGIVIYTGDRTVMGRIATLASGLEGGQTPIAAEIEHFIHIITGVAVFLGVSFFILSLILEYTWLEAVIFLIGIIVANVPEGLLATVTVCLTLTAKRMARKNCLVKNLEAVETLGSTSTICSDKTGTLTQNRMTVAHMWFDNQIHEADTTENQSGVSFDKTSATWLALSRIAGLCNRAVFQANQENLPILKRAVAGDASESALLKCIELCCGSVKEMRERYTKIVEIPFNSTNKYQLSIHKNLNANEPRHLLVMKGAPERILDRCSSILLHGKEQPLDEELKDAFQNAYLELGGLGERVLGFCHLLLPDEQFPEGFQFDTDEVNFPVDNLCFIGLISMIDPPRAAVPDAVGKCRSAGIKVIMVTGDHPITAKAIAKGVGIISEGNETVEDIAARLNIPVSQVNPRDAKACVVHGSDLKDMTSEQLDDILKYHTEIVFARTSPQQKLIIVEGCQRQGAIVAVTGDGVNDSPALKKADIGVAMGIAGSDVSKQAADMILLDDNFASIVTGVEEGRLIFDNLKKSIAYTLTSNIPEITPFLIFIIANIPLPLGTVTILCIDLGTDMVPAISLAYEQAESDIMKRQPRNPKTDKLVNERLISMAYGQIGMIQALGGFFTYFVILAENGFLPFHLLGIRVDWDDRWINDVEDSYGQQWTYEQRKIVEFTCHTAFFVSIVVVQWADLVICKTRRNSVFQQGMKNKILIFGLFEETALAAFLSYCPGMGVALRMYPLKPTWWFCAFPYSLLIFVYDEIRKLIIRRRPGGWVEKETYY.

The propeptide occupies 1–5; sequence MGKGV. A compositionally biased stretch (basic and acidic residues) spans 1-11; it reads MGKGVGRDKYE. The interval 1-38 is disordered; sequence MGKGVGRDKYEPAAVSEHGDKKGKKAKKERDMDELKKE. At 6–87 the chain is on the cytoplasmic side; it reads GRDKYEPAAV…NALTPPPTTP (82 aa). Lysine 9 is modified (N6-acetyllysine). At tyrosine 10 the chain carries Phosphotyrosine. Serine 16 bears the Phosphoserine; by PKC mark. N6-acetyllysine is present on lysine 21. Positions 28–38 are enriched in basic and acidic residues; sequence KERDMDELKKE. 2 positions are modified to phosphoserine: serine 40 and serine 47. A phosphoinositide-3 kinase binding region spans residues 82–84; the sequence is PPP. Residues 88–108 traverse the membrane as a helical segment; sequence EWVKFCRQLFGGFSMLLWIGA. Topologically, residues 109-131 are extracellular; the sequence is ILCFLAYGILAATEEDFDNDNLY. Residues 132–152 form a helical membrane-spanning segment; that stretch reads LGVVLAAVVIITGCFSYYQEA. Topologically, residues 153–288 are cytoplasmic; that stretch reads KSSKIMESFK…GGQTPIAAEI (136 aa). The segment at 216–235 is disordered; sequence SSLTGESEPQTRSPDFTNEN. Residue serine 228 is modified to Phosphoserine. Tyrosine 260 is modified (phosphotyrosine). The helical transmembrane segment at 289–308 threads the bilayer; it reads EHFIHIITGVAVFLGVSFFI. The Extracellular portion of the chain corresponds to 309–320; the sequence is LSLILEYTWLEA. Residues 321–338 traverse the membrane as a helical segment; the sequence is VIFLIGIIVANVPEGLLA. The Cytoplasmic segment spans residues 339–772; that stretch reads TVTVCLTLTA…EEGRLIFDNL (434 aa). Aspartate 376 serves as the catalytic 4-aspartylphosphate intermediate. Phosphoserine occurs at positions 452 and 484. Residue lysine 487 coordinates ATP. Tyrosine 542 is subject to Phosphotyrosine. Positions 596–717 are mediates interaction with SCN7A; that stretch reads RAAVPDAVGK…QGAIVAVTGD (122 aa). N6-succinyllysine is present on lysine 661. Residues serine 668 and serine 675 each carry the phosphoserine modification. Aspartate 717 and aspartate 721 together coordinate Mg(2+). The chain crosses the membrane as a helical span at residues 773–792; the sequence is KKSIAYTLTSNIPEITPFLI. Residues 793 to 802 are Extracellular-facing; it reads FIIANIPLPL. A helical membrane pass occupies residues 803-823; sequence GTVTILCIDLGTDMVPAISLA. Over 824-843 the chain is Cytoplasmic; the sequence is YEQAESDIMKRQPRNPKTDK. Residues 844 to 866 traverse the membrane as a helical segment; the sequence is LVNERLISMAYGQIGMIQALGGF. The Extracellular portion of the chain corresponds to 867 to 918; sequence FTYFVILAENGFLPFHLLGIRVDWDDRWINDVEDSYGQQWTYEQRKIVEFTC. Residues 919–938 form a helical membrane-spanning segment; the sequence is HTAFFVSIVVVQWADLVICK. The Cytoplasmic segment spans residues 939–951; it reads TRRNSVFQQGMKN. Serine 943 bears the Phosphoserine; by PKA mark. A helical transmembrane segment spans residues 952 to 970; sequence KILIFGLFEETALAAFLSY. The Extracellular portion of the chain corresponds to 971–985; the sequence is CPGMGVALRMYPLKP. A helical transmembrane segment spans residues 986–1006; sequence TWWFCAFPYSLLIFVYDEIRK. Residues 1007 to 1023 are Cytoplasmic-facing; sequence LIIRRRPGGWVEKETYY.

Belongs to the cation transport ATPase (P-type) (TC 3.A.3) family. Type IIC subfamily. In terms of assembly, the sodium/potassium-transporting ATPase is composed of a catalytic alpha subunit, an auxiliary non-catalytic beta subunit and an additional regulatory subunit. Interacts with regulatory subunit FXYD1. Interacts with regulatory subunit FXYD3. Interacts with SIK1. Interacts with SLC35G1 and STIM1. Interacts with CLN3; this interaction regulates the sodium/potassium-transporting ATPase complex localization at the plasma membrane. Interacts with SCN7A; activates ATP1A1 P-type sodium:potassium-exchanging transporter activity which indirectly signals to nearby neurons to regulate sodium homeostasis. In terms of processing, phosphorylation on Tyr-10 modulates pumping activity. Phosphorylation of Ser-943 by PKA modulates the response of ATP1A1 to PKC. Dephosphorylation by protein phosphatase 2A (PP2A) following increases in intracellular sodium, leading to increase catalytic activity. In terms of tissue distribution, expressed in endocardial endothelial cells.

The protein resides in the cell membrane. The protein localises to the basolateral cell membrane. It is found in the sarcolemma. Its subcellular location is the cell projection. It localises to the axon. The protein resides in the melanosome. It catalyses the reaction K(+)(out) + Na(+)(in) + ATP + H2O = K(+)(in) + Na(+)(out) + ADP + phosphate + H(+). Its function is as follows. This is the catalytic component of the active enzyme, which catalyzes the hydrolysis of ATP coupled with the exchange of sodium and potassium ions across the plasma membrane. This action creates the electrochemical gradient of sodium and potassium ions, providing the energy for active transport of various nutrients. Could also be part of an osmosensory signaling pathway that senses body-fluid sodium levels and controls salt intake behavior as well as voluntary water intake to regulate sodium homeostasis. This is Sodium/potassium-transporting ATPase subunit alpha-1 (ATP1A1) from Oryctolagus cuniculus (Rabbit).